The sequence spans 309 residues: Zinc transporter ZIPB (309 aa).

Residues 1–22 (MNQPSSLAADLRGAWHAQAQSH) lie on the Periplasmic side of the membrane. The chain crosses the membrane as a helical span at residues 23-50 (PLITLGLAASAAGVVLLLVAGIVNALTG). Residues 51–55 (ENRVH) lie on the Extracellular side of the membrane. The helical transmembrane segment at 56 to 81 (VGYAVLGGAAGFAATALGALMALGLR) threads the bilayer. Topologically, residues 82–83 (AI) are periplasmic. A helical transmembrane segment spans residues 84 to 119 (SARTQDAMLGFAAGMMLAASAFSLILPGLDAAGTIV). D89 provides a ligand contact to Zn(2+). M99 serves as a coordination point for Cd(2+). The Extracellular segment spans residues 120–121 (GP). A helical membrane pass occupies residues 122–145 (GPAAAAVVALGLGLGVLLMLGLDY). A Zn(2+)-binding site is contributed by D144. D144 contacts Cd(2+). Residues 146-165 (FTPHEHERTGHQGPEAARVN) are Periplasmic-facing. The helical transmembrane segment at 166-190 (RVWLFVLTIILHNLPEGMAIGVSFA) threads the bilayer. H177 contributes to the Zn(2+) binding site. 3 residues coordinate Cd(2+): H177, N178, and E181. E181 contributes to the Zn(2+) binding site. The Extracellular segment spans residues 191–192 (TG). A helical membrane pass occupies residues 193–222 (DLRIGLPLTSAIAIQDVPEGLAVALALRAV). Q207 lines the Zn(2+) pocket. The Cd(2+) site is built by Q207, D208, and E211. E211 is a Zn(2+) binding site. Over 223 to 224 (GL) the chain is Periplasmic. A helical membrane pass occupies residues 225-251 (PIGRAVLVAVASGLMEPLGALVGVGIS). E240 is a Cd(2+) binding site. Residues 252-255 (SGFA) are Extracellular-facing. Residues 256–275 (LAYPISMGLAAGAMIFVVSH) form a helical membrane-spanning segment. H275, E276, and H286 together coordinate Zn(2+). Residue H275 coordinates Cd(2+). At 276–287 (EVIPETHRNGHE) the chain is on the periplasmic side. A helical membrane pass occupies residues 288–308 (TTATVGLMAGFALMMFLDTAL). G309 is a topological domain (extracellular).

This sequence belongs to the ZIP transporter (TC 2.A.5) family. Homodimer. Also exists as a monomer.

Its subcellular location is the cell inner membrane. The enzyme catalyses Zn(2+)(in) = Zn(2+)(out). It catalyses the reaction Cd(2+)(in) = Cd(2+)(out). Its function is as follows. Selective electrodiffusional channel that mediates the uptake of Zn(2+). Exploits in vivo zinc concentration gradients (maintained by cellular zinc homeostasis) to passively move zinc ions into the cytoplasm. ZIPB-mediated zinc flux is dependent upon pH, but independent of the proton motive force. Is also able to import Cd(2+), but is not permeable to Co(2+), Cu(2+), Fe(2+), Mn(2+) and Ni(2+). In Bordetella bronchiseptica (strain ATCC BAA-588 / NCTC 13252 / RB50) (Alcaligenes bronchisepticus), this protein is Zinc transporter ZIPB.